A 280-amino-acid polypeptide reads, in one-letter code: Protein IMPACT homolog (280 aa).

One can recognise an RWD domain in the interval 9 to 109 (DELLALESIY…QAAAERESKL (101 aa)).

Belongs to the IMPACT family. As to quaternary structure, interacts (via N-terminus) with gcn1 (via C-terminus); this interaction reduces the gcn1-gcn20 complex formation and prevents the interaction of gcn1 with gcn2 protein kinase and gcn2 activation in amino acid-starved cells. Interacts (via C-terminus) with act1; this interaction occurs in a gcn1-independent manner. Interacts with rpl39; this interaction occurs in a gcn1-independent manner. Associates (via middle region) with ribosomes; this association occurs in a gcn1-independent manner and persists under amino acid starvation conditions.

It is found in the cytoplasm. The protein resides in the nucleus. In terms of biological role, translational regulator that ensures constant high levels of translation under amino acid starvation. Plays a role as a negative regulator of the gcn2 kinase activity; impairs gcn1-mediated gcn2 activation, and hence gcn2-mediated eIF-2-alpha phosphorylation in amino acid-starved cells and subsequent down-regulation of protein synthesis. In normal conditions, it resides in a actin complex and has no activity. The protein is Protein IMPACT homolog (yih1) of Schizosaccharomyces pombe (strain 972 / ATCC 24843) (Fission yeast).